Reading from the N-terminus, the 497-residue chain is Probable cytosol aminopeptidase (497 aa).

2 residues coordinate Mn(2+): K267 and D272. The active site involves K279. 3 residues coordinate Mn(2+): D290, D349, and E351. The active site involves R353.

The protein belongs to the peptidase M17 family. Requires Mn(2+) as cofactor.

The protein resides in the cytoplasm. It catalyses the reaction Release of an N-terminal amino acid, Xaa-|-Yaa-, in which Xaa is preferably Leu, but may be other amino acids including Pro although not Arg or Lys, and Yaa may be Pro. Amino acid amides and methyl esters are also readily hydrolyzed, but rates on arylamides are exceedingly low.. It carries out the reaction Release of an N-terminal amino acid, preferentially leucine, but not glutamic or aspartic acids.. In terms of biological role, presumably involved in the processing and regular turnover of intracellular proteins. Catalyzes the removal of unsubstituted N-terminal amino acids from various peptides. This is Probable cytosol aminopeptidase from Syntrophotalea carbinolica (strain DSM 2380 / NBRC 103641 / GraBd1) (Pelobacter carbinolicus).